The chain runs to 349 residues: Fructose-bisphosphate aldolase 2, chloroplastic (349 aa).

Substrate contacts are provided by Arg47 and Lys137. Glu177 functions as the Proton acceptor in the catalytic mechanism. Lys219 acts as the Schiff-base intermediate with dihydroxyacetone-P in catalysis.

It belongs to the class I fructose-bisphosphate aldolase family.

The protein resides in the plastid. It localises to the chloroplast. It carries out the reaction beta-D-fructose 1,6-bisphosphate = D-glyceraldehyde 3-phosphate + dihydroxyacetone phosphate. Its pathway is carbohydrate degradation; glycolysis; D-glyceraldehyde 3-phosphate and glycerone phosphate from D-glucose: step 4/4. In Pisum sativum (Garden pea), this protein is Fructose-bisphosphate aldolase 2, chloroplastic.